A 46-amino-acid polypeptide reads, in one-letter code: Large ribosomal subunit protein bL36B (46 aa).

It belongs to the bacterial ribosomal protein bL36 family.

In Enterobacter sp. (strain 638), this protein is Large ribosomal subunit protein bL36B.